Here is a 292-residue protein sequence, read N- to C-terminus: Ribosomal protein L11 methyltransferase (292 aa).

Thr145, Gly166, Asp188, and Asn229 together coordinate S-adenosyl-L-methionine.

It belongs to the methyltransferase superfamily. PrmA family.

The protein localises to the cytoplasm. The catalysed reaction is L-lysyl-[protein] + 3 S-adenosyl-L-methionine = N(6),N(6),N(6)-trimethyl-L-lysyl-[protein] + 3 S-adenosyl-L-homocysteine + 3 H(+). In terms of biological role, methylates ribosomal protein L11. This is Ribosomal protein L11 methyltransferase from Alteromonas mediterranea (strain DSM 17117 / CIP 110805 / LMG 28347 / Deep ecotype).